Reading from the N-terminus, the 148-residue chain is UPF0756 membrane protein YeaL (148 aa).

Helical transmembrane passes span 14-34 (ALGFISHNTTVAVSILVLIIV), 51-71 (LSIGIIILTIGVMAPIASGTL), 86-106 (LVAIAVGVIVSWLGGRGVTLM), and 121-141 (VLGVALFRGVPVGPLIAAGLV).

It belongs to the UPF0756 family.

The protein localises to the cell membrane. The polypeptide is UPF0756 membrane protein YeaL (Escherichia coli (strain B / REL606)).